Consider the following 122-residue polypeptide: Protein MGF 100-1R (122 aa).

It belongs to the asfivirus MGF 100 family.

Functionally, plays a role in virus cell tropism, and may be required for efficient virus replication in macrophages. In Ornithodoros (relapsing fever ticks), this protein is Protein MGF 100-1R.